The chain runs to 733 residues: Protein ROG3 (733 aa).

A PY-motif motif is present at residues 460-463 (PPNY). Residues 518-566 (RDNLGLPPSASSAAASRSLSPLLNVPAPEDGTERILPQSALGPNSGSVP) are disordered. Low complexity predominate over residues 523-540 (LPPSASSAAASRSLSPLL). The PY-motif motif lies at 625 to 628 (PPSY). Disordered stretches follow at residues 636–658 (QPRKPSRVHSRNSSTTLSSSIPT) and 693–733 (ELTS…GNKR). A compositionally biased stretch (low complexity) spans 646–658 (RNSSTTLSSSIPT).

This sequence belongs to the arrestin family. In terms of assembly, interacts with RSP5 via its 2 PY-motifs.

Its function is as follows. Involved in resistance to GST substrate o-dinitrobenzene (o-DNB). In Saccharomyces cerevisiae (strain ATCC 204508 / S288c) (Baker's yeast), this protein is Protein ROG3 (ROG3).